Reading from the N-terminus, the 624-residue chain is tRNA uridine 5-carboxymethylaminomethyl modification enzyme MnmG (624 aa).

14 to 19 (GAGHAG) serves as a coordination point for FAD. 273 to 287 (GTRYCPSFEDKVVRF) provides a ligand contact to NAD(+).

It belongs to the MnmG family. As to quaternary structure, homodimer. Heterotetramer of two MnmE and two MnmG subunits. The cofactor is FAD.

The protein resides in the cytoplasm. Functionally, NAD-binding protein involved in the addition of a carboxymethylaminomethyl (cmnm) group at the wobble position (U34) of certain tRNAs, forming tRNA-cmnm(5)s(2)U34. The sequence is that of tRNA uridine 5-carboxymethylaminomethyl modification enzyme MnmG from Syntrophomonas wolfei subsp. wolfei (strain DSM 2245B / Goettingen).